The primary structure comprises 209 residues: Ribosomal RNA large subunit methyltransferase E (209 aa).

Positions 63, 65, 83, 99, and 124 each coordinate S-adenosyl-L-methionine. The active-site Proton acceptor is the K164.

Belongs to the class I-like SAM-binding methyltransferase superfamily. RNA methyltransferase RlmE family.

Its subcellular location is the cytoplasm. It catalyses the reaction uridine(2552) in 23S rRNA + S-adenosyl-L-methionine = 2'-O-methyluridine(2552) in 23S rRNA + S-adenosyl-L-homocysteine + H(+). Functionally, specifically methylates the uridine in position 2552 of 23S rRNA at the 2'-O position of the ribose in the fully assembled 50S ribosomal subunit. This chain is Ribosomal RNA large subunit methyltransferase E, found in Vibrio atlanticus (strain LGP32) (Vibrio splendidus (strain Mel32)).